Consider the following 223-residue polypeptide: Small ribosomal subunit protein uS3 (223 aa).

The KH type-2 domain maps to 39–108 (IRNFVKKNSY…NILINIVEVK (70 aa)).

This sequence belongs to the universal ribosomal protein uS3 family. In terms of assembly, part of the 30S ribosomal subunit. Forms a tight complex with proteins S10 and S14.

In terms of biological role, binds the lower part of the 30S subunit head. Binds mRNA in the 70S ribosome, positioning it for translation. The chain is Small ribosomal subunit protein uS3 from Clostridium botulinum (strain Hall / ATCC 3502 / NCTC 13319 / Type A).